The sequence spans 200 residues: Protein C2-DOMAIN ABA-RELATED 5 (200 aa).

The C2 domain occupies 22–142 (VAGEKHKDRR…LKMHLHDLPS (121 aa)). The Ca(2+) site is built by arginine 57, aspartate 58, aspartate 63, aspartate 109, tyrosine 110, aspartate 111, and aspartate 117.

Belongs to the plant CAR protein family. In terms of assembly, binds to PYR/PYL/RCAR abscisic acid intracellular receptors in an ABA-independent manner, both at the plasma membrane and in the nucleus.

Its subcellular location is the cell membrane. The protein localises to the nucleus. In terms of biological role, stimulates the GTPase/ATPase activities of Obg-like ATPases. Mediates the transient calcium-dependent interaction of PYR/PYL/RCAR abscisic acid (ABA) receptors with the plasma membrane and thus regulates ABA sensitivity. This chain is Protein C2-DOMAIN ABA-RELATED 5, found in Arabidopsis thaliana (Mouse-ear cress).